The following is a 230-amino-acid chain: uncharacterized protein (230 aa).

NADP(+) is bound at residue 10–34; it reads VVTGASSGIGEAIAKKLSQQGASIV. S139 provides a ligand contact to substrate. The active-site Proton acceptor is Y152.

This sequence belongs to the short-chain dehydrogenases/reductases (SDR) family.

This is an uncharacterized protein from Staphylococcus epidermidis (strain ATCC 12228 / FDA PCI 1200).